A 126-amino-acid chain; its full sequence is Probable small nuclear ribonucleoprotein Sm D1 (126 aa).

Residues 2–74 (KLVRFLMKLS…IRYIILPDPL (73 aa)) enclose the Sm domain. A disordered region spans residues 86–126 (RKKARAARAGASRGRGRGGMRGGRGGRGRGRGGPRGGGPRR). A compositionally biased stretch (basic residues) spans 99–126 (GRGRGGMRGGRGGRGRGRGGPRGGGPRR).

Belongs to the snRNP core protein family.

The protein localises to the nucleus. The protein resides in the cytoplasm. It localises to the cytosol. Functionally, plays a role in pre-mRNA splicing as a core component of the spliceosomal U1, U2, U4 and U5 small nuclear ribonucleoproteins (snRNPs), the building blocks of the spliceosome. This chain is Probable small nuclear ribonucleoprotein Sm D1 (snr-3), found in Caenorhabditis elegans.